The following is a 110-amino-acid chain: UPF0339 protein YegP (110 aa).

A run of 2 repeats spans residues 10 to 58 (SSDS…RYEK) and 61 to 109 (ASNG…VKDN).

The protein belongs to the UPF0339 family. Duplicated subfamily.

In Escherichia coli O157:H7, this protein is UPF0339 protein YegP (yegP).